We begin with the raw amino-acid sequence, 375 residues long: Alcohol dehydrogenase B (375 aa).

Zn(2+) contacts are provided by cysteine 40, histidine 62, cysteine 92, cysteine 95, cysteine 98, cysteine 106, and cysteine 169.

This sequence belongs to the zinc-containing alcohol dehydrogenase family. It depends on Zn(2+) as a cofactor.

It localises to the cytoplasm. It carries out the reaction a primary alcohol + NAD(+) = an aldehyde + NADH + H(+). The enzyme catalyses a secondary alcohol + NAD(+) = a ketone + NADH + H(+). The sequence is that of Alcohol dehydrogenase B (adhB) from Mycobacterium bovis (strain ATCC BAA-935 / AF2122/97).